We begin with the raw amino-acid sequence, 313 residues long: MNSGFTHITVLLEEAVEALAVRADGCYLDGTFGRGGHSRLILNHLGPDGRLLGFDKDPQAIATGQALAAEDGRFVIVQRSFAELGSQAQELGLAGKVSGILLDLGVSSPQLDDPERGFSFMNDGPLDMRMDPTRGVSAAEFIASAPAEEIARVFKEYGEERFAKRMANAVVQRREIQPFERTADLAEVLKVANPAWEKGKNPATRAFQGLRIHVNNELGDLEAGLEAAMESLEVGGRLVVISFHSLEDRIVKLFMRKLAKGEADNMPRNLPIQYKAFEPKIKIHGKAQFASDVETKANPRSRSAVMRVAEKLR.

S-adenosyl-L-methionine is bound by residues Gly35–His37, Asp55, Phe81, Asp103, and Gln110.

This sequence belongs to the methyltransferase superfamily. RsmH family.

It localises to the cytoplasm. It catalyses the reaction cytidine(1402) in 16S rRNA + S-adenosyl-L-methionine = N(4)-methylcytidine(1402) in 16S rRNA + S-adenosyl-L-homocysteine + H(+). Functionally, specifically methylates the N4 position of cytidine in position 1402 (C1402) of 16S rRNA. This chain is Ribosomal RNA small subunit methyltransferase H, found in Pseudomonas syringae pv. tomato (strain ATCC BAA-871 / DC3000).